Consider the following 208-residue polypeptide: Uracil phosphoribosyltransferase (208 aa).

Residues Arg78, Arg103, and 130–138 (DPMLATGGS) contribute to the 5-phospho-alpha-D-ribose 1-diphosphate site. Residues Ile193 and 198 to 200 (GDA) each bind uracil. Residue Asp199 participates in 5-phospho-alpha-D-ribose 1-diphosphate binding.

This sequence belongs to the UPRTase family. Mg(2+) is required as a cofactor.

The enzyme catalyses UMP + diphosphate = 5-phospho-alpha-D-ribose 1-diphosphate + uracil. The protein operates within pyrimidine metabolism; UMP biosynthesis via salvage pathway; UMP from uracil: step 1/1. Allosterically activated by GTP. Its function is as follows. Catalyzes the conversion of uracil and 5-phospho-alpha-D-ribose 1-diphosphate (PRPP) to UMP and diphosphate. The polypeptide is Uracil phosphoribosyltransferase (Blochmanniella pennsylvanica (strain BPEN)).